Reading from the N-terminus, the 527-residue chain is Beta-glucosidase 19 (527 aa).

An N-terminal signal peptide occupies residues 1–21 (MKIPLLGLLLLISLVGSPTRA). A beta-D-glucoside is bound by residues glutamine 52 and histidine 155. An N-linked (GlcNAc...) asparagine glycan is attached at asparagine 183. Residue 200 to 201 (NE) coordinates a beta-D-glucoside. Glutamate 201 acts as the Proton donor in catalysis. Cysteine 220 and cysteine 231 are oxidised to a cystine. Residues tyrosine 345 and glutamate 418 each coordinate a beta-D-glucoside. Glutamate 418 functions as the Nucleophile in the catalytic mechanism. The N-linked (GlcNAc...) asparagine glycan is linked to asparagine 462. Residues tryptophan 469, 476–477 (EW), and phenylalanine 485 contribute to the a beta-D-glucoside site. An N-linked (GlcNAc...) asparagine glycan is attached at asparagine 495. Residues 524–527 (HEEL) carry the Prevents secretion from ER motif.

It belongs to the glycosyl hydrolase 1 family.

Its subcellular location is the endoplasmic reticulum lumen. The enzyme catalyses Hydrolysis of terminal, non-reducing beta-D-glucosyl residues with release of beta-D-glucose.. In Arabidopsis thaliana (Mouse-ear cress), this protein is Beta-glucosidase 19.